The following is a 114-amino-acid chain: Iron-sulfur cluster assembly protein CyaY (114 aa).

It belongs to the frataxin family.

Its function is as follows. Involved in iron-sulfur (Fe-S) cluster assembly. May act as a regulator of Fe-S biogenesis. This is Iron-sulfur cluster assembly protein CyaY from Ralstonia pickettii (strain 12J).